A 185-amino-acid polypeptide reads, in one-letter code: Threonylcarbamoyl-AMP synthase (185 aa).

Positions 4–185 constitute a YrdC-like domain; it reads SWRVQQAAQD…IATAQIVRAG (182 aa).

The protein belongs to the SUA5 family. TsaC subfamily.

Its subcellular location is the cytoplasm. The enzyme catalyses L-threonine + hydrogencarbonate + ATP = L-threonylcarbamoyladenylate + diphosphate + H2O. Functionally, required for the formation of a threonylcarbamoyl group on adenosine at position 37 (t(6)A37) in tRNAs that read codons beginning with adenine. Catalyzes the conversion of L-threonine, HCO(3)(-)/CO(2) and ATP to give threonylcarbamoyl-AMP (TC-AMP) as the acyladenylate intermediate, with the release of diphosphate. The chain is Threonylcarbamoyl-AMP synthase from Pseudomonas syringae pv. syringae (strain B728a).